A 320-amino-acid polypeptide reads, in one-letter code: rRNA methyltransferase 2, mitochondrial (320 aa).

The transit peptide at 1–18 directs the protein to the mitochondrion; the sequence is MILVYNRIRSIISSSLGR. Residues 83 to 86, aspartate 104, 178 to 179, and aspartate 203 contribute to the S-adenosyl-L-methionine site; these read PGAW and DI. Lysine 264 acts as the Proton acceptor in catalysis.

This sequence belongs to the class I-like SAM-binding methyltransferase superfamily. RNA methyltransferase RlmE family.

The protein resides in the mitochondrion. The enzyme catalyses uridine(2791) in 21S rRNA + S-adenosyl-L-methionine = 2'-O-methyluridine(2791) in 21S rRNA + S-adenosyl-L-homocysteine + H(+). Its function is as follows. S-adenosyl-L-methionine-dependent 2'-O-ribose methyltransferase that catalyzes the formation of 2'-O-methyluridine at position 2791 (Um2791) in the 21S mitochondrial large subunit ribosomal RNA (mtLSU rRNA), a universally conserved modification in the peptidyl transferase domain of the mtLSU rRNA. The chain is rRNA methyltransferase 2, mitochondrial from Saccharomyces cerevisiae (strain ATCC 204508 / S288c) (Baker's yeast).